The sequence spans 357 residues: DNA replication and repair protein RecF (357 aa).

ATP is bound at residue 30 to 37 (GANGSGKT).

Belongs to the RecF family.

The protein resides in the cytoplasm. Its function is as follows. The RecF protein is involved in DNA metabolism; it is required for DNA replication and normal SOS inducibility. RecF binds preferentially to single-stranded, linear DNA. It also seems to bind ATP. The sequence is that of DNA replication and repair protein RecF from Escherichia fergusonii (strain ATCC 35469 / DSM 13698 / CCUG 18766 / IAM 14443 / JCM 21226 / LMG 7866 / NBRC 102419 / NCTC 12128 / CDC 0568-73).